A 201-amino-acid chain; its full sequence is Recombination protein RecR (201 aa).

A C4-type zinc finger spans residues 57 to 72 (CCDCRTFTEEERCTIC). Positions 81-176 (GQICVVESPA…AASRIAHGVP (96 aa)) constitute a Toprim domain.

The protein belongs to the RecR family.

Functionally, may play a role in DNA repair. It seems to be involved in an RecBC-independent recombinational process of DNA repair. It may act with RecF and RecO. This chain is Recombination protein RecR, found in Proteus mirabilis (strain HI4320).